Consider the following 333-residue polypeptide: Glycerol-3-phosphate dehydrogenase [NAD(P)+] (333 aa).

NADPH contacts are provided by W15 and K108. Sn-glycerol 3-phosphate is bound by residues K108, G136, and S138. A140 serves as a coordination point for NADPH. The sn-glycerol 3-phosphate site is built by K191, D244, S254, R255, and N256. Residue K191 is the Proton acceptor of the active site. R255 provides a ligand contact to NADPH. V279 and E281 together coordinate NADPH.

This sequence belongs to the NAD-dependent glycerol-3-phosphate dehydrogenase family.

It localises to the cytoplasm. It catalyses the reaction sn-glycerol 3-phosphate + NAD(+) = dihydroxyacetone phosphate + NADH + H(+). The catalysed reaction is sn-glycerol 3-phosphate + NADP(+) = dihydroxyacetone phosphate + NADPH + H(+). The protein operates within membrane lipid metabolism; glycerophospholipid metabolism. Its function is as follows. Catalyzes the reduction of the glycolytic intermediate dihydroxyacetone phosphate (DHAP) to sn-glycerol 3-phosphate (G3P), the key precursor for phospholipid synthesis. This Maricaulis maris (strain MCS10) (Caulobacter maris) protein is Glycerol-3-phosphate dehydrogenase [NAD(P)+].